The sequence spans 372 residues: Glutamate 5-kinase (372 aa).

K14 lines the ATP pocket. Residues S54, D141, and N153 each coordinate substrate. 173-174 (TD) lines the ATP pocket. Positions 280-358 (RGTLVLDAGA…DAIESILGYS (79 aa)) constitute a PUA domain.

This sequence belongs to the glutamate 5-kinase family.

The protein resides in the cytoplasm. It catalyses the reaction L-glutamate + ATP = L-glutamyl 5-phosphate + ADP. Its pathway is amino-acid biosynthesis; L-proline biosynthesis; L-glutamate 5-semialdehyde from L-glutamate: step 1/2. Catalyzes the transfer of a phosphate group to glutamate to form L-glutamate 5-phosphate. The protein is Glutamate 5-kinase of Pseudomonas putida (strain GB-1).